The following is a 115-amino-acid chain: Putative membrane protein insertion efficiency factor (115 aa).

This sequence belongs to the UPF0161 family.

The protein localises to the cell membrane. Functionally, could be involved in insertion of integral membrane proteins into the membrane. In Mycolicibacterium paratuberculosis (strain ATCC BAA-968 / K-10) (Mycobacterium paratuberculosis), this protein is Putative membrane protein insertion efficiency factor.